The primary structure comprises 308 residues: Ornithine carbamoyltransferase (308 aa).

Residues 56–59 (STRT), Gln-83, Arg-107, and 134–137 (HPCQ) each bind carbamoyl phosphate. Residues Asn-165, Asp-225, and 229-230 (SM) each bind L-ornithine. Carbamoyl phosphate-binding positions include 266-267 (CL) and Arg-294.

It belongs to the aspartate/ornithine carbamoyltransferase superfamily. OTCase family.

Its subcellular location is the cytoplasm. The enzyme catalyses carbamoyl phosphate + L-ornithine = L-citrulline + phosphate + H(+). It participates in amino-acid biosynthesis; L-arginine biosynthesis; L-arginine from L-ornithine and carbamoyl phosphate: step 1/3. Functionally, reversibly catalyzes the transfer of the carbamoyl group from carbamoyl phosphate (CP) to the N(epsilon) atom of ornithine (ORN) to produce L-citrulline. This chain is Ornithine carbamoyltransferase, found in Ruegeria pomeroyi (strain ATCC 700808 / DSM 15171 / DSS-3) (Silicibacter pomeroyi).